Here is a 369-residue protein sequence, read N- to C-terminus: 4-hydroxy-3-methylbut-2-en-1-yl diphosphate synthase (flavodoxin) (369 aa).

Cysteine 270, cysteine 273, cysteine 305, and glutamate 312 together coordinate [4Fe-4S] cluster.

Belongs to the IspG family. Requires [4Fe-4S] cluster as cofactor.

The enzyme catalyses (2E)-4-hydroxy-3-methylbut-2-enyl diphosphate + oxidized [flavodoxin] + H2O + 2 H(+) = 2-C-methyl-D-erythritol 2,4-cyclic diphosphate + reduced [flavodoxin]. It participates in isoprenoid biosynthesis; isopentenyl diphosphate biosynthesis via DXP pathway; isopentenyl diphosphate from 1-deoxy-D-xylulose 5-phosphate: step 5/6. Its function is as follows. Converts 2C-methyl-D-erythritol 2,4-cyclodiphosphate (ME-2,4cPP) into 1-hydroxy-2-methyl-2-(E)-butenyl 4-diphosphate. In Pseudomonas putida (strain ATCC 47054 / DSM 6125 / CFBP 8728 / NCIMB 11950 / KT2440), this protein is 4-hydroxy-3-methylbut-2-en-1-yl diphosphate synthase (flavodoxin).